The primary structure comprises 212 residues: Regulatory protein RecX (212 aa).

The protein belongs to the RecX family.

It is found in the cytoplasm. Its function is as follows. Modulates RecA activity. The chain is Regulatory protein RecX from Clostridioides difficile (strain 630) (Peptoclostridium difficile).